A 451-amino-acid polypeptide reads, in one-letter code: Tryptophan biosynthesis protein TrpCF (451 aa).

An indole-3-glycerol phosphate synthase region spans residues 1 to 256 (MQETILNKII…TNIKSLIIGD (256 aa)). The N-(5'-phosphoribosyl)anthranilate isomerase stretch occupies residues 257-451 (NKVCGLTRII…ISLIFKKLTF (195 aa)).

In the N-terminal section; belongs to the TrpC family. It in the C-terminal section; belongs to the TrpF family. In terms of assembly, monomer.

The catalysed reaction is N-(5-phospho-beta-D-ribosyl)anthranilate = 1-(2-carboxyphenylamino)-1-deoxy-D-ribulose 5-phosphate. It carries out the reaction 1-(2-carboxyphenylamino)-1-deoxy-D-ribulose 5-phosphate + H(+) = (1S,2R)-1-C-(indol-3-yl)glycerol 3-phosphate + CO2 + H2O. It participates in amino-acid biosynthesis; L-tryptophan biosynthesis; L-tryptophan from chorismate: step 3/5. The protein operates within amino-acid biosynthesis; L-tryptophan biosynthesis; L-tryptophan from chorismate: step 4/5. In terms of biological role, bifunctional enzyme that catalyzes two sequential steps of tryptophan biosynthetic pathway. The first reaction is catalyzed by the isomerase, coded by the TrpF domain; the second reaction is catalyzed by the synthase, coded by the TrpC domain. This Buchnera aphidicola subsp. Schizaphis graminum (strain Sg) protein is Tryptophan biosynthesis protein TrpCF (trpC).